The sequence spans 67 residues: MRCFPVFIILLLLIASAPCFDARTKTDDDVPLSSLRDNLKRTIRTRLNIRECCEDGWCCTAAPLTGR.

An N-terminal signal peptide occupies residues M1–C19. Residues F20–R50 constitute a propeptide that is removed on maturation. Residues E51 and E54 each carry the 4-carboxyglutamate modification. 2 disulfide bridges follow: C52/C58 and C53/C59. 6'-bromotryptophan is present on W57. O-linked (GalNAc...) threonine glycosylation occurs at T60. P63 is modified (4-hydroxyproline). Residues L64–R67 constitute a propeptide that is removed on maturation.

O-glycan consists of the disaccharide Gal-GalNAc. In terms of tissue distribution, expressed by the venom duct.

It localises to the secreted. Functionally, epsilon-conotoxins act at presynaptic membranes, blocking the calcium channels or G protein-coupled receptors. Causes hyperactivity upon intracranial injection into mice. Causes dorsal fins drooping in fish. The sequence is that of Epsilon-conotoxin TxVA from Conus textile (Cloth-of-gold cone).